Here is a 610-residue protein sequence, read N- to C-terminus: Isocitrate dehydrogenase kinase/phosphatase (610 aa).

Residues 359 to 365 and Lys-380 each bind ATP; that span reads APGFKGT. Asp-419 is a catalytic residue.

Belongs to the AceK family.

It localises to the cytoplasm. The catalysed reaction is L-seryl-[isocitrate dehydrogenase] + ATP = O-phospho-L-seryl-[isocitrate dehydrogenase] + ADP + H(+). Functionally, bifunctional enzyme which can phosphorylate or dephosphorylate isocitrate dehydrogenase (IDH) on a specific serine residue. This is a regulatory mechanism which enables bacteria to bypass the Krebs cycle via the glyoxylate shunt in response to the source of carbon. When bacteria are grown on glucose, IDH is fully active and unphosphorylated, but when grown on acetate or ethanol, the activity of IDH declines drastically concomitant with its phosphorylation. The chain is Isocitrate dehydrogenase kinase/phosphatase from Rhodopseudomonas palustris (strain ATCC BAA-98 / CGA009).